Here is a 276-residue protein sequence, read N- to C-terminus: Large ribosomal subunit protein uL2 (276 aa).

The disordered stretch occupies residues 213-264; that stretch reads WLGRRPHNRGVVMNPVDHPHGGGEGRTSGGRHPVTPWGKPTKGYKTRTNKRT.

Belongs to the universal ribosomal protein uL2 family. Part of the 50S ribosomal subunit. Forms a bridge to the 30S subunit in the 70S ribosome.

Its function is as follows. One of the primary rRNA binding proteins. Required for association of the 30S and 50S subunits to form the 70S ribosome, for tRNA binding and peptide bond formation. It has been suggested to have peptidyltransferase activity; this is somewhat controversial. Makes several contacts with the 16S rRNA in the 70S ribosome. The polypeptide is Large ribosomal subunit protein uL2 (Granulibacter bethesdensis (strain ATCC BAA-1260 / CGDNIH1)).